Consider the following 320-residue polypeptide: 4-hydroxy-3-methylbut-2-enyl diphosphate reductase 2 (320 aa).

Residue Cys-18 participates in [4Fe-4S] cluster binding. Positions 47 and 81 each coordinate (2E)-4-hydroxy-3-methylbut-2-enyl diphosphate. Dimethylallyl diphosphate is bound by residues His-47 and His-81. Residues His-47 and His-81 each contribute to the isopentenyl diphosphate site. Cys-103 contacts [4Fe-4S] cluster. His-131 is a (2E)-4-hydroxy-3-methylbut-2-enyl diphosphate binding site. His-131 lines the dimethylallyl diphosphate pocket. His-131 provides a ligand contact to isopentenyl diphosphate. Glu-133 (proton donor) is an active-site residue. Thr-172 is a binding site for (2E)-4-hydroxy-3-methylbut-2-enyl diphosphate. Position 202 (Cys-202) interacts with [4Fe-4S] cluster. (2E)-4-hydroxy-3-methylbut-2-enyl diphosphate is bound by residues Ser-230, Ser-231, Asn-232, and Ser-275. Positions 230, 231, 232, and 275 each coordinate dimethylallyl diphosphate. The isopentenyl diphosphate site is built by Ser-230, Ser-231, Asn-232, and Ser-275.

Belongs to the IspH family. The cofactor is [4Fe-4S] cluster.

It carries out the reaction isopentenyl diphosphate + 2 oxidized [2Fe-2S]-[ferredoxin] + H2O = (2E)-4-hydroxy-3-methylbut-2-enyl diphosphate + 2 reduced [2Fe-2S]-[ferredoxin] + 2 H(+). The enzyme catalyses dimethylallyl diphosphate + 2 oxidized [2Fe-2S]-[ferredoxin] + H2O = (2E)-4-hydroxy-3-methylbut-2-enyl diphosphate + 2 reduced [2Fe-2S]-[ferredoxin] + 2 H(+). Its pathway is isoprenoid biosynthesis; dimethylallyl diphosphate biosynthesis; dimethylallyl diphosphate from (2E)-4-hydroxy-3-methylbutenyl diphosphate: step 1/1. The protein operates within isoprenoid biosynthesis; isopentenyl diphosphate biosynthesis via DXP pathway; isopentenyl diphosphate from 1-deoxy-D-xylulose 5-phosphate: step 6/6. Its function is as follows. Catalyzes the conversion of 1-hydroxy-2-methyl-2-(E)-butenyl 4-diphosphate (HMBPP) into a mixture of isopentenyl diphosphate (IPP) and dimethylallyl diphosphate (DMAPP). Acts in the terminal step of the DOXP/MEP pathway for isoprenoid precursor biosynthesis. The polypeptide is 4-hydroxy-3-methylbut-2-enyl diphosphate reductase 2 (Rhodopseudomonas palustris (strain ATCC BAA-98 / CGA009)).